The sequence spans 273 residues: Dermonecrotic toxin LapSicTox-alphaIB1c (273 aa).

H5 is a catalytic residue. Residues E25 and D27 each coordinate Mg(2+). The active-site Nucleophile is H41. Disulfide bonds link C45-C51 and C47-C190. D85 contacts Mg(2+). N250 is a glycosylation site (N-linked (GlcNAc...) asparagine).

The protein belongs to the arthropod phospholipase D family. Class II subfamily. Mg(2+) serves as cofactor. As to expression, expressed by the venom gland.

Its subcellular location is the secreted. The catalysed reaction is an N-(acyl)-sphingosylphosphocholine = an N-(acyl)-sphingosyl-1,3-cyclic phosphate + choline. It catalyses the reaction an N-(acyl)-sphingosylphosphoethanolamine = an N-(acyl)-sphingosyl-1,3-cyclic phosphate + ethanolamine. The enzyme catalyses a 1-acyl-sn-glycero-3-phosphocholine = a 1-acyl-sn-glycero-2,3-cyclic phosphate + choline. It carries out the reaction a 1-acyl-sn-glycero-3-phosphoethanolamine = a 1-acyl-sn-glycero-2,3-cyclic phosphate + ethanolamine. Functionally, dermonecrotic toxins cleave the phosphodiester linkage between the phosphate and headgroup of certain phospholipids (sphingolipid and lysolipid substrates), forming an alcohol (often choline) and a cyclic phosphate. This toxin acts on sphingomyelin (SM). It may also act on ceramide phosphoethanolamine (CPE), lysophosphatidylcholine (LPC) and lysophosphatidylethanolamine (LPE), but not on lysophosphatidylserine (LPS), and lysophosphatidylglycerol (LPG). It acts by transphosphatidylation, releasing exclusively cyclic phosphate products as second products. Induces dermonecrosis, hemolysis, increased vascular permeability, edema, inflammatory response, and platelet aggregation. The protein is Dermonecrotic toxin LapSicTox-alphaIB1c of Loxosceles apachea (Apache recluse spider).